The chain runs to 604 residues: Sulfite reductase [NADPH] flavoprotein alpha-component (604 aa).

One can recognise a Flavodoxin-like domain in the interval 65 to 203 (VTILYGSQTG…AAGQWHADVL (139 aa)). Residues 71–76 (SQTGNG), 118–121 (STHG), and 154–163 (LGDSSYEFFC) each bind FMN. Residues 236–453 (QNPYSAEVLV…VEPNKHFRLP (218 aa)) enclose the FAD-binding FR-type domain. FAD-binding positions include Thr324, Leu358, 392–395 (RLYS), 410–412 (TVA), and 425–428 (GGAS). NADP(+) contacts are provided by residues 524–525 (SR), 530–534 (KIYVQ), and Asp566. Tyr604 serves as a coordination point for FAD.

The protein belongs to the NADPH-dependent sulphite reductase flavoprotein subunit CysJ family. In the N-terminal section; belongs to the flavodoxin family. It in the C-terminal section; belongs to the flavoprotein pyridine nucleotide cytochrome reductase family. In terms of assembly, alpha(8)-beta(8). The alpha component is a flavoprotein, the beta component is a hemoprotein. Requires FAD as cofactor. FMN serves as cofactor.

The catalysed reaction is hydrogen sulfide + 3 NADP(+) + 3 H2O = sulfite + 3 NADPH + 4 H(+). It participates in sulfur metabolism; hydrogen sulfide biosynthesis; hydrogen sulfide from sulfite (NADPH route): step 1/1. In terms of biological role, component of the sulfite reductase complex that catalyzes the 6-electron reduction of sulfite to sulfide. This is one of several activities required for the biosynthesis of L-cysteine from sulfate. The flavoprotein component catalyzes the electron flow from NADPH -&gt; FAD -&gt; FMN to the hemoprotein component. In Shewanella sp. (strain ANA-3), this protein is Sulfite reductase [NADPH] flavoprotein alpha-component.